A 599-amino-acid chain; its full sequence is Adenine deaminase (599 aa).

The protein belongs to the metallo-dependent hydrolases superfamily. Adenine deaminase family. The cofactor is Mn(2+).

It carries out the reaction adenine + H2O + H(+) = hypoxanthine + NH4(+). This Clostridium botulinum (strain Loch Maree / Type A3) protein is Adenine deaminase.